A 590-amino-acid chain; its full sequence is Arginine--tRNA ligase (590 aa).

Residues 126–136 (PNVAKEMHVGH) carry the 'HIGH' region motif.

It belongs to the class-I aminoacyl-tRNA synthetase family. Monomer.

Its subcellular location is the cytoplasm. The catalysed reaction is tRNA(Arg) + L-arginine + ATP = L-arginyl-tRNA(Arg) + AMP + diphosphate. This chain is Arginine--tRNA ligase, found in Streptomyces avermitilis (strain ATCC 31267 / DSM 46492 / JCM 5070 / NBRC 14893 / NCIMB 12804 / NRRL 8165 / MA-4680).